A 1656-amino-acid polypeptide reads, in one-letter code: Probable phospholipid-transporting ATPase DNF3 (1656 aa).

Over 1-164 (MGIADGQRRR…PRQLYAQFSK (164 aa)) the chain is Lumenal. Positions 36 to 74 (ELEDINESKTFSGSDNNDKDDRDETSGNYAAEEDYEMEE) are disordered. The span at 51 to 60 (NNDKDDRDET) shows a compositional bias: basic and acidic residues. Residues 165–185 (LANTYFFIVAVLQMIPGWSTT) form a helical membrane-spanning segment. Over 186 to 451 (GTYTTIIPLC…RTKAPKLQRK (266 aa)) the chain is Cytoplasmic. A helical membrane pass occupies residues 452 to 472 (INMIIVFMVFVVATISLFSYL). Residues 473-495 (GHVLHKKKYIDQNKAWYLFQADA) are Lumenal-facing. A helical transmembrane segment spans residues 496–516 (GVAPTIMSFIIMYNTVIPLSL). Topologically, residues 517 to 1157 (YVTMEIIKVV…ISKMNAVSQE (641 aa)) are cytoplasmic. Catalysis depends on Asp566, which acts as the 4-aspartylphosphate intermediate. Asp566, Lys567, and Thr568 together coordinate ATP. Asp566 provides a ligand contact to Mg(2+). A Mg(2+)-binding site is contributed by Thr568. The residue at position 627 (Ser627) is a Phosphoserine. ATP-binding positions include Glu765, Phe813, Ser815, Lys818, Lys838, Arg1034, Thr1035, Thr1114, Gly1115, Asp1116, 1167–1174 (VVVIDGAT), Arg1202, and Lys1208. A helical transmembrane segment spans residues 1158–1178 (VDSGNIAHCVVVIDGATMAMF). Over 1179 to 1318 (EGNPTYMSVF…MFSGSSLYEP (140 aa)) the chain is Lumenal. Residue Asp1229 participates in Mg(2+) binding. Residues Asn1232 and Asp1233 each coordinate ATP. The helical transmembrane segment at 1319–1339 (WSLSMFNTLFTSLPVLCIGMF) threads the bilayer. Topologically, residues 1340–1365 (EKDLKPMTLLTVPELYSYGRLSQGFN) are cytoplasmic. Residues 1366–1386 (WLIFMEWVILATTNSLIITFL) traverse the membrane as a helical segment. The Lumenal portion of the chain corresponds to 1387–1395 (NVVMWGMSS). Residues 1396–1416 (LSDNTMYPLGLINFTAIVALI) traverse the membrane as a helical segment. Topologically, residues 1417 to 1432 (NVKSQFVEMHNRNWLA) are cytoplasmic. The chain crosses the membrane as a helical span at residues 1433 to 1453 (FTSVVLSCGGWLVWCCALPIL). The Lumenal segment spans residues 1454–1473 (NNTDQIYDVAYGFYNHFGKD). The helical transmembrane segment at 1474-1494 (ITFWCTSLVLALLPITLDIVY) threads the bilayer. The Cytoplasmic portion of the chain corresponds to 1495-1656 (KTFKVMIWPS…IIQARLKDLE (162 aa)). The interval 1554 to 1576 (PRTNSRASAKTHNSSIYSMSNGN) is disordered.

Belongs to the cation transport ATPase (P-type) (TC 3.A.3) family. Type IV subfamily. In terms of assembly, component of a flippase complex consisting of DNF3 and YNR048W/CRF1. Interacts with YNR048W/CRF1; the interaction is direct and required for proper expression and endoplasmic reticulum (ER) export of either partner. Mg(2+) is required as a cofactor.

Its subcellular location is the golgi apparatus. The protein resides in the trans-Golgi network membrane. The protein localises to the endosome membrane. It carries out the reaction ATP + H2O + phospholipidSide 1 = ADP + phosphate + phospholipidSide 2.. The enzyme catalyses a 1,2-diacyl-sn-glycero-3-phosphocholine(out) + ATP + H2O = a 1,2-diacyl-sn-glycero-3-phosphocholine(in) + ADP + phosphate + H(+). It catalyses the reaction a 1,2-diacyl-sn-glycero-3-phosphoethanolamine(out) + ATP + H2O = a 1,2-diacyl-sn-glycero-3-phosphoethanolamine(in) + ADP + phosphate + H(+). Functionally, catalytic component of a P4-ATPase flippase complex which catalyzes the hydrolysis of ATP coupled to the transport of phosphatidylcholine and small amounts of phosphatidylethanolamine from the lumen to the cytosolic leaflet of the trans-Golgi network and ensures the maintenance of asymmetric distribution of phospholipids. May be involved in transport from early endosomes to the trans-Golgi network (TGN). This chain is Probable phospholipid-transporting ATPase DNF3 (DNF3), found in Saccharomyces cerevisiae (strain ATCC 204508 / S288c) (Baker's yeast).